The sequence spans 338 residues: Bifunctional methylenetetrahydrofolate dehydrogenase/cyclohydrolase 2, mitochondrial (338 aa).

Substrate is bound by residues 89-93 (YVRNK) and 136-138 (VQL). NAD(+)-binding positions include 205 to 207 (GRS) and arginine 238. 314-318 (PGGVG) is a substrate binding site.

This sequence belongs to the tetrahydrofolate dehydrogenase/cyclohydrolase family. Mg(2+) serves as cofactor. Widely expressed.

It localises to the mitochondrion inner membrane. The enzyme catalyses (6R)-5,10-methylene-5,6,7,8-tetrahydrofolate + NAD(+) = (6R)-5,10-methenyltetrahydrofolate + NADH. The catalysed reaction is (6R)-5,10-methenyltetrahydrofolate + H2O = (6R)-10-formyltetrahydrofolate + H(+). It catalyses the reaction (6R)-5,10-methylene-5,6,7,8-tetrahydrofolate + NADP(+) = (6R)-5,10-methenyltetrahydrofolate + NADPH. Its pathway is one-carbon metabolism; tetrahydrofolate interconversion. Its function is as follows. Bifunctional mitochondrial folate-interconverting enzyme that has both NAD/NADP-dependent methylenetetrahydrofolate dehydrogenase and methenyltetrahydrofolate cyclohydrolase activities. The chain is Bifunctional methylenetetrahydrofolate dehydrogenase/cyclohydrolase 2, mitochondrial from Mus musculus (Mouse).